Here is a 307-residue protein sequence, read N- to C-terminus: MDLILLVGIATALLLILITLYFLQSKNAKTETKAAAQPQRGVPQRAQEGVPRRAQIARNQRNRLRQNQNAPAVAAAAAPAAAVDSDDDEAAAAGDENGPRVPQGAVLDEKMGAKKRAKMEAKEQKRLQREQELHDREQRKVKEAKEDAERKQQEDLDAEVERKKAEADRLAKEERERKEHEEYLKMKAAFSIEEEGFEEGDADDKESLLADFIQYIKDNKVVLLEDLATAFKLKTQQAIDRIQELQENGTLTGVIDDRGKFIYVSEAELAAVAKFIKQRGRVSIAELAESSNNLINLTPVAAGESSA.

Over 1–2 (MD) the chain is Lumenal. A helical membrane pass occupies residues 3–23 (LILLVGIATALLLILITLYFL). Over 24–307 (QSKNAKTETK…TPVAAGESSA (284 aa)) the chain is Cytoplasmic. The tract at residues 31 to 175 (ETKAAAQPQR…EADRLAKEER (145 aa)) is disordered. The segment covering 52–83 (RRAQIARNQRNRLRQNQNAPAVAAAAAPAAAV) has biased composition (low complexity). Basic and acidic residues predominate over residues 107–175 (LDEKMGAKKR…EADRLAKEER (69 aa)).

The protein belongs to the DDRGK1 family. In terms of assembly, interacts with Atg9; the interaction is transient.

Its subcellular location is the endoplasmic reticulum membrane. Its function is as follows. Substrate adapter for ufmylation, the covalent attachment of the ubiquitin-like modifier UFM1 to substrate proteins. Required for ufmylation of Atg9; protects the nervous system during aging, possibly by stabilizing Atg9 and supporting its function. This Drosophila virilis (Fruit fly) protein is DDRGK domain-containing protein 1.